The sequence spans 435 residues: Transcription activator AKTR-2 (435 aa).

A DNA-binding region (zn(2)-C6 fungal-type) is located at residues 16-43; it reads CDFCTQSKLRCNKNKPSCRRCTIQQQVC. The interval 49–103 is disordered; the sequence is RRTGRPPKHPRRADDSQETSGQHGHQDPMTSAPADSCEQQSSHLDLEGDDTDFTL. A compositionally biased stretch (basic residues) spans 50–59; it reads RTGRPPKHPR.

It is found in the nucleus. Its function is as follows. Transcription factor that regulates the expression of the gene clusters that mediate the biosynthesis of the host-selective toxins (HSTs) AK-toxins responsible for Japanese pear black spot disease by the Japanese pear pathotype. AK-toxins are esters of 9,10-epoxy 8-hydroxy 9-methyldecatrienoic acid (EDA). On cellular level, AK-toxins affect plasma membrane of susceptible cells and cause a sudden increase in loss of K(+) after a few minutes of toxin treatment. This is Transcription activator AKTR-2 from Alternaria alternata (Alternaria rot fungus).